Here is a 146-residue protein sequence, read N- to C-terminus: Hemoglobin subunit beta-1/2 (146 aa).

At Val1 the chain carries N-acetylvaline. Residues His2–His146 form the Globin domain. At Thr12 the chain carries Phosphothreonine. Residue Lys59 is modified to N6-acetyllysine. His63 is a binding site for heme b. Position 82 is an N6-acetyllysine (Lys82). His92 is a binding site for heme b. Cys93 bears the S-nitrosocysteine mark. At Lys144 the chain carries N6-acetyllysine.

Belongs to the globin family. As to quaternary structure, heterotetramer of two alpha chains and two beta chains. As to expression, red blood cells.

Its function is as follows. Involved in oxygen transport from the lung to the various peripheral tissues. The polypeptide is Hemoglobin subunit beta-1/2 (HBB) (Physeter macrocephalus (Sperm whale)).